A 107-amino-acid chain; its full sequence is Replication restart protein PriB (107 aa).

Residues 1-97 (MNTLELSARV…LHLQQARRIA (97 aa)) enclose the SSB domain.

Belongs to the PriB family. As to quaternary structure, homodimer. Interacts with PriA and DnaT. Component of the replication restart primosome. Primosome assembly occurs via a 'hand-off' mechanism. PriA binds to replication forks, subsequently PriB then DnaT bind; DnaT then displaces ssDNA to generate the helicase loading substrate.

Involved in the restart of stalled replication forks, which reloads the replicative helicase on sites other than the origin of replication; the PriA-PriB pathway is the major replication restart pathway. During primosome assembly it facilitates complex formation between PriA and DnaT on DNA; stabilizes PriA on DNA. Stimulates the DNA unwinding activity of PriA helicase. The polypeptide is Replication restart protein PriB (Bordetella parapertussis (strain 12822 / ATCC BAA-587 / NCTC 13253)).